We begin with the raw amino-acid sequence, 364 residues long: MQERHTEQDYRALLIADTPIIDVRAPIEFEQGAMPAAINLPLMNNDERAAVGTCYKQQGSDAALALGHKLVAGEIRQQRMDAWRAACLQNPQGILCCARGGQRSHIVQSWLHAAGIDYPLVEGGYKALRQTTIQATIELAQKPIVLIGGCTGCGKTLLVQQQPNGVDLEGLARHRGSAFGRTLQPQLSQASFENLLAAEMLKTDARQNLRLWVLEDESRMIGSNHLPECLRERMTQAAIAVVEDPFEIRLERLNEEYFLRMHHDFTHAYGDEQGWQEYCEYLHHGLSAIKRRLGLQRYNELAARLDAALTTQLATGSTDGHLAWLVPLLKEYYDPMYRYQLEKKAEKVVFRGEWAEVAEWVKAR.

Residues 14–137 (LIADTPIIDV…LRQTTIQATI (124 aa)) enclose the Rhodanese domain. C97 (S-selanylcysteine intermediate) is an active-site residue.

It belongs to the SelU family. As to quaternary structure, monomer.

It carries out the reaction 5-methylaminomethyl-2-thiouridine(34) in tRNA + selenophosphate + (2E)-geranyl diphosphate + H2O + H(+) = 5-methylaminomethyl-2-selenouridine(34) in tRNA + (2E)-thiogeraniol + phosphate + diphosphate. The enzyme catalyses 5-methylaminomethyl-2-thiouridine(34) in tRNA + (2E)-geranyl diphosphate = 5-methylaminomethyl-S-(2E)-geranyl-thiouridine(34) in tRNA + diphosphate. The catalysed reaction is 5-methylaminomethyl-S-(2E)-geranyl-thiouridine(34) in tRNA + selenophosphate + H(+) = 5-methylaminomethyl-2-(Se-phospho)selenouridine(34) in tRNA + (2E)-thiogeraniol. It catalyses the reaction 5-methylaminomethyl-2-(Se-phospho)selenouridine(34) in tRNA + H2O = 5-methylaminomethyl-2-selenouridine(34) in tRNA + phosphate. Involved in the post-transcriptional modification of the uridine at the wobble position (U34) of tRNA(Lys), tRNA(Glu) and tRNA(Gln). Catalyzes the conversion of 2-thiouridine (S2U-RNA) to 2-selenouridine (Se2U-RNA). Acts in a two-step process involving geranylation of 2-thiouridine (S2U) to S-geranyl-2-thiouridine (geS2U) and subsequent selenation of the latter derivative to 2-selenouridine (Se2U) in the tRNA chain. This Escherichia coli O8 (strain IAI1) protein is tRNA 2-selenouridine synthase.